The primary structure comprises 96 residues: MNIEAYPHDFRGSLAVVSATGVAGCRTWTLRSVETGKHYELAPASIEGWPLPAKREDSRPNSIIVNYDGNDVIALELATGELYRTRAPATTLRLRR.

This Escherichia coli protein is Protein TraA (traA).